A 488-amino-acid chain; its full sequence is Calcium/calmodulin-dependent protein kinase type II subunit delta (488 aa).

Alanine 2 is modified (N-acetylalanine). In terms of domain architecture, Protein kinase spans 14-272 (YQLFEELGKG…ASEALKHPWI (259 aa)). Residues 20-28 (LGKGAFSVV) and lysine 43 each bind ATP. Aspartate 136 acts as the Proton acceptor in catalysis. The segment at 283 to 292 (HRQETVDCLK) is autoinhibitory domain. At threonine 287 the chain carries Phosphothreonine; by autocatalysis. Residues 291 to 301 (LKKFNARRKLK) are calmodulin-binding. Threonine 306 and threonine 307 each carry phosphothreonine; by autocatalysis. Serine 315 is subject to Phosphoserine. An N6-acetyllysine modification is found at lysine 317. Phosphoserine is present on residues serine 318 and serine 340. Residues 325-350 (GVKKRKSSSSVQMMESTESSNTTIED) are disordered. The segment covering 332-347 (SSSVQMMESTESSNTT) has biased composition (polar residues). At threonine 341 the chain carries Phosphothreonine. Serine 343 bears the Phosphoserine mark. 2 positions are modified to phosphothreonine: threonine 346 and threonine 347. Serine 414 is subject to Phosphoserine.

The protein belongs to the protein kinase superfamily. CAMK Ser/Thr protein kinase family. CaMK subfamily. CAMK2 is composed of 4 different chains: alpha (CAMK2A), beta (CAMK2B), gamma (CAMK2G), and delta (CAMK2D). The different isoforms assemble into homo- or heteromultimeric holoenzymes composed of 12 subunits with two hexameric rings stacked one on top of the other. Interacts with RRAD and CACNB2. Post-translationally, autophosphorylation of Thr-287 following activation by Ca(2+)/calmodulin. Phosphorylation of Thr-287 locks the kinase into an activated state.

The protein localises to the cell membrane. It is found in the sarcolemma. It localises to the sarcoplasmic reticulum membrane. The catalysed reaction is L-seryl-[protein] + ATP = O-phospho-L-seryl-[protein] + ADP + H(+). The enzyme catalyses L-threonyl-[protein] + ATP = O-phospho-L-threonyl-[protein] + ADP + H(+). With respect to regulation, activated by Ca(2+)/calmodulin. Binding of calmodulin results in conformational change that relieves intrasteric autoinhibition and allows autophosphorylation of Thr-287 which turns the kinase in a constitutively active form and confers to the kinase a Ca(2+)-independent activity. Functionally, calcium/calmodulin-dependent protein kinase involved in the regulation of Ca(2+) homeostatis and excitation-contraction coupling (ECC) in heart by targeting ion channels, transporters and accessory proteins involved in Ca(2+) influx into the myocyte, Ca(2+) release from the sarcoplasmic reticulum (SR), SR Ca(2+) uptake and Na(+) and K(+) channel transport. Targets also transcription factors and signaling molecules to regulate heart function. In its activated form, is involved in the pathogenesis of dilated cardiomyopathy and heart failure. Contributes to cardiac decompensation and heart failure by regulating SR Ca(2+) release via direct phosphorylation of RYR2 Ca(2+) channel on 'Ser-2808'. In the nucleus, phosphorylates the MEF2 repressor HDAC4, promoting its nuclear export and binding to 14-3-3 protein, and expression of MEF2 and genes involved in the hypertrophic program. Is essential for left ventricular remodeling responses to myocardial infarction. In pathological myocardial remodeling acts downstream of the beta adrenergic receptor signaling cascade to regulate key proteins involved in ECC. Regulates Ca(2+) influx to myocytes by binding and phosphorylating the L-type Ca(2+) channel subunit beta-2 CACNB2. In addition to Ca(2+) channels, can target and regulate the cardiac sarcolemmal Na(+) channel Nav1.5/SCN5A and the K+ channel Kv4.3/KCND3, which contribute to arrhythmogenesis in heart failure. Phosphorylates phospholamban (PLN/PLB), an endogenous inhibitor of SERCA2A/ATP2A2, contributing to the enhancement of SR Ca(2+) uptake that may be important in frequency-dependent acceleration of relaxation (FDAR) and maintenance of contractile function during acidosis. May participate in the modulation of skeletal muscle function in response to exercise, by regulating SR Ca(2+) transport through phosphorylation of PLN/PLB and triadin, a ryanodine receptor-coupling factor. In response to interferon-gamma (IFN-gamma) stimulation, catalyzes phosphorylation of STAT1, stimulating the JAK-STAT signaling pathway. The protein is Calcium/calmodulin-dependent protein kinase type II subunit delta (CAMK2D) of Bos taurus (Bovine).